Consider the following 456-residue polypeptide: Mitochondrial import inner membrane translocase subunit TIM50 (456 aa).

The transit peptide at 1-22 directs the protein to the mitochondrion; the sequence is MSLSKLSQKCFSRHHARTFIRF. Residues 23–171 lie on the Mitochondrial matrix side of the membrane; it reads SSSDFQSLLG…RRKRMERNTR (149 aa). Disordered stretches follow at residues 101-120 and 132-165; these read ETEK…AIDE and EEAA…RRKR. Over residues 137 to 153 the composition is skewed to polar residues; it reads SKTSAPSGSSGDNNDQP. The helical transmembrane segment at 172-192 threads the bilayer; the sequence is IGGYVLLGGSVIGFISFCFYY. Residues 193–456 are Mitochondrial intermembrane-facing; sequence GRAQRDEAGN…LFGFRRHASA (264 aa). In terms of domain architecture, FCP1 homology spans 247–391; the sequence is YLQPKYTIVI…VDLAELLKTI (145 aa).

Belongs to the TIM50 family. Component of the TIM23 complex at least composed of tim-23, tim-17 and tim-50.

Its subcellular location is the mitochondrion inner membrane. Functionally, essential component of the TIM23 complex, a complex that mediates the translocation of transit peptide-containing proteins across the mitochondrial inner membrane. This chain is Mitochondrial import inner membrane translocase subunit TIM50 (scpl-4), found in Caenorhabditis briggsae.